The sequence spans 31 residues: Cyclotide mden-N (31 aa).

The cyclopeptide (Gly-Asn) cross-link spans 1–31; it reads GTIPCGESCVYIPCLTSALGCSCKNKVCYRN. Cystine bridges form between Cys-5/Cys-21, Cys-9/Cys-23, and Cys-14/Cys-28.

It belongs to the cyclotide family. Bracelet subfamily. Post-translationally, this is a cyclic peptide.

Its function is as follows. Probably participates in a plant defense mechanism. In Melicytus dentatus (Tree violet), this protein is Cyclotide mden-N.